A 417-amino-acid polypeptide reads, in one-letter code: MLEQMGIAAKQASYKLAQLSSREKNRVLEKIADELEAQSESILNANAQDVADACANGLSEAMLDRLALTPARLKGIADDVRQVCNLADPVGQVIDGGVLDSGLRLERRRVPLGVIGVIYEARPNVTVDVASLCLKTGNAVILRGGKETCRTNAATVAVIQDALKSCGLPAGAVQAIDNPDRALVSEMLRMDKYIDMLIPRGGAGLHKLCREQSTIPVITGGIGVCHIYVDESAEIAEALKVIVNAKTQRPSTCNTVETLLVNKNIADSFLPALSKQMAESGVTLHADAAALAQLQAGPAKVVAVKAEEYDDEFLSLDLNVKIVSDLDDAIAHIREHGTQHSDAILTRDMRNAQRFVNEVDSSAVYVNASTRFTDGGQFGLGAEVAVSTQKLHARGPMGLEALTTYKWIGIGDYTIRA.

It belongs to the gamma-glutamyl phosphate reductase family.

Its subcellular location is the cytoplasm. It carries out the reaction L-glutamate 5-semialdehyde + phosphate + NADP(+) = L-glutamyl 5-phosphate + NADPH + H(+). It functions in the pathway amino-acid biosynthesis; L-proline biosynthesis; L-glutamate 5-semialdehyde from L-glutamate: step 2/2. Functionally, catalyzes the NADPH-dependent reduction of L-glutamate 5-phosphate into L-glutamate 5-semialdehyde and phosphate. The product spontaneously undergoes cyclization to form 1-pyrroline-5-carboxylate. The sequence is that of Gamma-glutamyl phosphate reductase from Escherichia coli O6:K15:H31 (strain 536 / UPEC).